We begin with the raw amino-acid sequence, 105 residues long: Large ribosomal subunit protein uL24 (105 aa).

This sequence belongs to the universal ribosomal protein uL24 family. In terms of assembly, part of the 50S ribosomal subunit.

One of two assembly initiator proteins, it binds directly to the 5'-end of the 23S rRNA, where it nucleates assembly of the 50S subunit. Functionally, one of the proteins that surrounds the polypeptide exit tunnel on the outside of the subunit. This chain is Large ribosomal subunit protein uL24, found in Psychrobacter arcticus (strain DSM 17307 / VKM B-2377 / 273-4).